Consider the following 194-residue polypeptide: Imidazoleglycerol-phosphate dehydratase (194 aa).

It belongs to the imidazoleglycerol-phosphate dehydratase family.

The protein localises to the cytoplasm. It carries out the reaction D-erythro-1-(imidazol-4-yl)glycerol 3-phosphate = 3-(imidazol-4-yl)-2-oxopropyl phosphate + H2O. Its pathway is amino-acid biosynthesis; L-histidine biosynthesis; L-histidine from 5-phospho-alpha-D-ribose 1-diphosphate: step 6/9. The protein is Imidazoleglycerol-phosphate dehydratase of Thermoanaerobacter sp. (strain X514).